A 256-amino-acid polypeptide reads, in one-letter code: Small ribosomal subunit protein eS1 (256 aa).

Basic residues predominate over residues 1 to 18 (MAVGKNKRLSKGKKGVKK). Residues 1 to 20 (MAVGKNKRLSKGKKGVKKRT) form a disordered region. Alanine 2 is subject to N-acetylalanine; partial.

This sequence belongs to the eukaryotic ribosomal protein eS1 family. Component of the small ribosomal subunit. Mature ribosomes consist of a small (40S) and a large (60S) subunit. The 40S subunit contains about 33 different proteins and 1 molecule of RNA (18S). The 60S subunit contains about 49 different proteins and 3 molecules of RNA (25S, 5.8S and 5S).

The protein localises to the cytoplasm. This is Small ribosomal subunit protein eS1 (rps1) from Aspergillus clavatus (strain ATCC 1007 / CBS 513.65 / DSM 816 / NCTC 3887 / NRRL 1 / QM 1276 / 107).